The following is a 149-amino-acid chain: Large ribosomal subunit protein uL11 (149 aa).

This sequence belongs to the universal ribosomal protein uL11 family. Part of the ribosomal stalk of the 50S ribosomal subunit. Interacts with L10 and the large rRNA to form the base of the stalk. L10 forms an elongated spine to which L12 dimers bind in a sequential fashion forming a multimeric L10(L12)X complex. One or more lysine residues are methylated.

In terms of biological role, forms part of the ribosomal stalk which helps the ribosome interact with GTP-bound translation factors. The polypeptide is Large ribosomal subunit protein uL11 (Methylobacterium sp. (strain 4-46)).